A 181-amino-acid chain; its full sequence is Thioredoxin M-type, chloroplastic (181 aa).

The N-terminal 67 residues, 1–67 (MAIENCLQLS…RQFRYSSVVC (67 aa)), are a transit peptide targeting the chloroplast. Positions 68–180 (KASEAVKEVQ…LTDSIEKYLS (113 aa)) constitute a Thioredoxin domain. Catalysis depends on nucleophile residues Cys-104 and Cys-107. An intrachain disulfide couples Cys-104 to Cys-107.

This sequence belongs to the thioredoxin family. Plant M-type subfamily. As to quaternary structure, forms a complex with heterodimeric ferredoxin-thioredoxin reductase (FTR) and ferredoxin.

The protein resides in the plastid. It is found in the chloroplast. Its function is as follows. Participates in various redox reactions through the reversible oxidation of the active center dithiol to a disulfide. The M form is known to activate NADP-malate dehydrogenase. The protein is Thioredoxin M-type, chloroplastic of Spinacia oleracea (Spinach).